A 197-amino-acid polypeptide reads, in one-letter code: ATP-dependent Clp protease proteolytic subunit (197 aa).

Ser-98 functions as the Nucleophile in the catalytic mechanism. Residue His-123 is part of the active site.

Belongs to the peptidase S14 family. Fourteen ClpP subunits assemble into 2 heptameric rings which stack back to back to give a disk-like structure with a central cavity, resembling the structure of eukaryotic proteasomes.

The protein localises to the cytoplasm. It catalyses the reaction Hydrolysis of proteins to small peptides in the presence of ATP and magnesium. alpha-casein is the usual test substrate. In the absence of ATP, only oligopeptides shorter than five residues are hydrolyzed (such as succinyl-Leu-Tyr-|-NHMec, and Leu-Tyr-Leu-|-Tyr-Trp, in which cleavage of the -Tyr-|-Leu- and -Tyr-|-Trp bonds also occurs).. Cleaves peptides in various proteins in a process that requires ATP hydrolysis. Has a chymotrypsin-like activity. Plays a major role in the degradation of misfolded proteins. In Natranaerobius thermophilus (strain ATCC BAA-1301 / DSM 18059 / JW/NM-WN-LF), this protein is ATP-dependent Clp protease proteolytic subunit.